Reading from the N-terminus, the 276-residue chain is N-acetylmuramoyl-L-alanine amidase AmiD (276 aa).

An N-terminal signal peptide occupies residues 1–16 (MRRFFWLVAAALLLAG). Residue cysteine 17 is the site of N-palmitoyl cysteine attachment. Cysteine 17 is lipidated: S-diacylglycerol cysteine. The N-acetylmuramoyl-L-alanine amidase domain occupies 42-179 (PRIKVLVIHY…APQRKDDPGP (138 aa)). Residue histidine 50 participates in Zn(2+) binding. 51 to 52 (YT) is a binding site for substrate. Residue glutamate 119 is the Proton acceptor of the active site. Zn(2+) is bound by residues histidine 166 and aspartate 176.

It belongs to the N-acetylmuramoyl-L-alanine amidase 2 family. The cofactor is Zn(2+).

The protein localises to the cell outer membrane. The catalysed reaction is Hydrolyzes the link between N-acetylmuramoyl residues and L-amino acid residues in certain cell-wall glycopeptides.. The sequence is that of N-acetylmuramoyl-L-alanine amidase AmiD (amiD) from Escherichia coli (strain K12).